The following is a 160-amino-acid chain: Putative 4-hydroxy-4-methyl-2-oxoglutarate aldolase (160 aa).

Substrate-binding positions include 76–79 (GDMI) and Arg98. Residue Asp99 participates in a divalent metal cation binding.

Belongs to the class II aldolase/RraA-like family. As to quaternary structure, homotrimer. A divalent metal cation is required as a cofactor.

The catalysed reaction is 4-hydroxy-4-methyl-2-oxoglutarate = 2 pyruvate. It carries out the reaction oxaloacetate + H(+) = pyruvate + CO2. Its function is as follows. Catalyzes the aldol cleavage of 4-hydroxy-4-methyl-2-oxoglutarate (HMG) into 2 molecules of pyruvate. Also contains a secondary oxaloacetate (OAA) decarboxylase activity due to the common pyruvate enolate transition state formed following C-C bond cleavage in the retro-aldol and decarboxylation reactions. The polypeptide is Putative 4-hydroxy-4-methyl-2-oxoglutarate aldolase (Alcanivorax borkumensis (strain ATCC 700651 / DSM 11573 / NCIMB 13689 / SK2)).